The following is a 602-amino-acid chain: Elongation factor 4 (602 aa).

The tr-type G domain maps to 7–189 (RNIRNFSIIA…AIVQRIPAPQ (183 aa)). GTP contacts are provided by residues 19 to 24 (DHGKST) and 136 to 139 (NKID).

This sequence belongs to the TRAFAC class translation factor GTPase superfamily. Classic translation factor GTPase family. LepA subfamily.

The protein localises to the cell inner membrane. It carries out the reaction GTP + H2O = GDP + phosphate + H(+). Its function is as follows. Required for accurate and efficient protein synthesis under certain stress conditions. May act as a fidelity factor of the translation reaction, by catalyzing a one-codon backward translocation of tRNAs on improperly translocated ribosomes. Back-translocation proceeds from a post-translocation (POST) complex to a pre-translocation (PRE) complex, thus giving elongation factor G a second chance to translocate the tRNAs correctly. Binds to ribosomes in a GTP-dependent manner. This is Elongation factor 4 from Xylella fastidiosa (strain M12).